The following is a 274-amino-acid chain: MRSNNNNPLTRDEILSRYFPQYRPAVAASQGLSGGSCIIAHDTHRIVLRRHHDPDAPPAHFLRHHRALSQLPASLAPRALFYTPGWMAVEYLHGVVNSALPDADELAALLYHLHQQPRFGWRIALSPLLAQYWSCCDPARRTPFWLRRLKQLQKNGEPRPLRLAPLHMDVHGDNIVLTSAGLRLIDWEYAGDGDIALELAAVWVEDERQHRQLADAYAARARIDARQLWRQIRLWHPWVIMLKAGWFEYRWRQTGEQQFIRLADETWRQLRMKG.

Belongs to the thiamine kinase family.

The catalysed reaction is thiamine + ATP = thiamine phosphate + ADP + H(+). It participates in cofactor biosynthesis; thiamine diphosphate biosynthesis; thiamine phosphate from thiamine: step 1/1. Functionally, catalyzes the ATP-dependent phosphorylation of thiamine to thiamine phosphate. Is involved in thiamine salvage. The protein is Thiamine kinase of Salmonella typhi.